The following is an 82-amino-acid chain: uncharacterized protein (82 aa).

The protein to M.thermoautotrophicum MTH386.

This is an uncharacterized protein from Methanocaldococcus jannaschii (strain ATCC 43067 / DSM 2661 / JAL-1 / JCM 10045 / NBRC 100440) (Methanococcus jannaschii).